Here is a 402-residue protein sequence, read N- to C-terminus: Multidrug resistance protein MdtH (402 aa).

11 consecutive transmembrane segments (helical) span residues 13–33, 34–54, 99–116, 139–159, 165–185, 214–234, 243–263, 277–297, 300–320, 340–360, and 368–388; these read YFLL…FPLI, SIRF…ALGL, PWVL…GTLF, LLMM…SWLL, LVCS…AWYL, VLTL…LPIM, AAVK…LYPI, LMAG…TSSL, LFTL…ARET, LGLA…FDAG, and LPWL…WWQF.

It belongs to the major facilitator superfamily. DHA1 family. MdtH (TC 2.A.1.2.21) subfamily.

The protein resides in the cell inner membrane. The sequence is that of Multidrug resistance protein MdtH from Klebsiella pneumoniae (strain 342).